Here is a 425-residue protein sequence, read N- to C-terminus: G protein-activated inward rectifier potassium channel 2 (425 aa).

At 1-91 (MTMAKLTESM…ILTTLVDLKW (91 aa)) the chain is on the cytoplasmic side. Serine 18 and serine 25 each carry phosphoserine. The helical transmembrane segment at 92–116 (RFNLLIFVMVYTVTWLFFGMIWWLI) threads the bilayer. The Extracellular segment spans residues 117 to 140 (AYIRGDMDHVEDPSWTPCVTNLNG). The helical; Pore-forming intramembrane region spans 141–152 (FVSAFLFSIETE). Residues 153 to 159 (TTIGYGY) constitute an intramembrane region (pore-forming). The Selectivity filter motif lies at 154 to 159 (TIGYGY). Over 160–168 (RVITDKCPE) the chain is Extracellular. The helical transmembrane segment at 169–190 (GIILLLIQSVLGSIVNAFMVGC) threads the bilayer. At 191–425 (MFVKISQPKK…VANLENESKV (235 aa)) the chain is on the cytoplasmic side. Residues 392–425 (NQHAELETEEEEKNPEEQTERNGDVANLENESKV) are disordered. A PDZ-binding motif is present at residues 422 to 425 (ESKV).

It belongs to the inward rectifier-type potassium channel (TC 1.A.2.1) family. KCNJ6 subfamily. Associates with KCNJ3/GIRK1 or KCNJ5/GRIK4 to form a G-protein-activated heteromultimer pore-forming unit. The resulting inward current is much larger. Interacts (via PDZ-binding motif) with SNX27 (via PDZ domain); the interaction is required when endocytosed to prevent degradation in lysosomes and promote recycling to the plasma membrane. In terms of tissue distribution, expressed in insulin-secreting cells and brain.

The protein resides in the membrane. The catalysed reaction is K(+)(in) = K(+)(out). With respect to regulation, activated by phosphatidylinositol 4,5 biphosphate (PtdIns(4,5)P2). In terms of biological role, inward rectifier potassium channels are characterized by a greater tendency to allow potassium to flow into the cell rather than out of it. Their voltage dependence is regulated by the concentration of extracellular potassium; as external potassium is raised, the voltage range of the channel opening shifts to more positive voltages. The inward rectification is mainly due to the blockage of outward current by internal magnesium. This potassium channel may be involved in the regulation of insulin secretion by glucose and/or neurotransmitters acting through G-protein-coupled receptors. This is G protein-activated inward rectifier potassium channel 2 (KCNJ6) from Mesocricetus auratus (Golden hamster).